We begin with the raw amino-acid sequence, 436 residues long: Chromosomal replication initiator protein DnaA (436 aa).

The tract at residues 1–69 (MLADEVIELL…ANIFEVKTGI (69 aa)) is domain I, interacts with DnaA modulators. The domain II stretch occupies residues 69-99 (IKPVISITTQKNRVSIKAKDIDVKQIRTQSS). A domain III, AAA+ region region spans residues 100–314 (LLNPSYTFES…SAIININAFA (215 aa)). Residues Gly-144, Gly-146, Lys-147, and Thr-148 each contribute to the ATP site. The segment at 315 to 436 (NIMRQEITLE…ELKNKITSKE (122 aa)) is domain IV, binds dsDNA.

This sequence belongs to the DnaA family. Oligomerizes as a right-handed, spiral filament on DNA at oriC.

The protein resides in the cytoplasm. Functionally, plays an essential role in the initiation and regulation of chromosomal replication. ATP-DnaA binds to the origin of replication (oriC) to initiate formation of the DNA replication initiation complex once per cell cycle. Binds the DnaA box (a 9 base pair repeat at the origin) and separates the double-stranded (ds)DNA. Forms a right-handed helical filament on oriC DNA; dsDNA binds to the exterior of the filament while single-stranded (ss)DNA is stabiized in the filament's interior. The ATP-DnaA-oriC complex binds and stabilizes one strand of the AT-rich DNA unwinding element (DUE), permitting loading of DNA polymerase. After initiation quickly degrades to an ADP-DnaA complex that is not apt for DNA replication. Binds acidic phospholipids. The polypeptide is Chromosomal replication initiator protein DnaA (Campylobacter fetus subsp. fetus (strain 82-40)).